The primary structure comprises 318 residues: Type II restriction enzyme HaeIII (318 aa).

It carries out the reaction Endonucleolytic cleavage of DNA to give specific double-stranded fragments with terminal 5'-phosphates.. Its function is as follows. A P subtype restriction enzyme that recognizes the double-stranded sequence 5'-GGCC-3' and cleaves after G-2. The sequence is that of Type II restriction enzyme HaeIII (haeIIIR) from Haemophilus aegyptius.